We begin with the raw amino-acid sequence, 308 residues long: Putative lipid kinase SH2167 (308 aa).

One can recognise a DAGKc domain in the interval 1–139 (MGQKFNHGVL…YDVMKVNGTY (139 aa)). ATP-binding positions include serine 44, 74–80 (GDGTVNE), and threonine 101. Mg(2+)-binding residues include serine 220, aspartate 223, and lysine 225. Glutamate 281 serves as the catalytic Proton acceptor.

The protein belongs to the diacylglycerol/lipid kinase family. It depends on Mg(2+) as a cofactor.

May catalyze the ATP-dependent phosphorylation of lipids other than diacylglycerol (DAG). In Staphylococcus haemolyticus (strain JCSC1435), this protein is Putative lipid kinase SH2167.